The following is a 196-amino-acid chain: HTH-type transcriptional regulator Hpr (196 aa).

The HTH marR-type domain maps to Ser13 to Gly157. A DNA-binding region (H-T-H motif) is located at residues Ile63–Ala86.

Homodimer.

Its function is as follows. Negative regulator of protease production and sporulation. This is HTH-type transcriptional regulator Hpr from Shouchella clausii (strain KSM-K16) (Alkalihalobacillus clausii).